The chain runs to 164 residues: Ribosome-binding factor A (164 aa).

Belongs to the RbfA family. In terms of assembly, monomer. Binds 30S ribosomal subunits, but not 50S ribosomal subunits or 70S ribosomes.

The protein localises to the cytoplasm. Its function is as follows. One of several proteins that assist in the late maturation steps of the functional core of the 30S ribosomal subunit. Associates with free 30S ribosomal subunits (but not with 30S subunits that are part of 70S ribosomes or polysomes). Required for efficient processing of 16S rRNA. May interact with the 5'-terminal helix region of 16S rRNA. This Caulobacter sp. (strain K31) protein is Ribosome-binding factor A.